A 1084-amino-acid chain; its full sequence is Teashirt homolog 1 (1084 aa).

Disordered stretches follow at residues 49–108 (EETE…SVSY), 140–167 (NSAT…TAST), and 269–298 (GHYR…MEME). 2 stretches are compositionally biased toward polar residues: residues 57–71 (QSYQ…TNQD) and 140–152 (NSAT…SQKE). 2 consecutive C2H2-type zinc fingers follow at residues 246–270 (FRCK…ETGH) and 307–331 (LKCM…KTKH). Positions 269–284 (GHYRDDNRDKDSEKTK) are enriched in basic and acidic residues. A C2H2-type 3; atypical zinc finger spans residues 416–440 (LKCMECGSSHDTLQQLTAHMMVTGH). 2 disordered regions span residues 467–534 (SIPL…EKFE) and 653–728 (TGKV…LKAK). 3 stretches are compositionally biased toward basic and acidic residues: residues 496–534 (SEEK…EKFE), 653–671 (TGKV…EKSS), and 681–714 (KENK…ESTL). Ser-771 carries the post-translational modification Phosphoserine. Residues 855–879 (GRLTPKSSTPSTVSEKSDADGSSFE) are disordered. Polar residues predominate over residues 859 to 868 (PKSSTPSTVS). The homeobox; atypical DNA-binding region spans 891–961 (RKGRQSNWNP…NVKYQLRRTG (71 aa)). 2 C2H2-type zinc fingers span residues 976–998 (FFCN…LETH) and 1044–1067 (FQCK…SKTH).

This sequence belongs to the teashirt C2H2-type zinc-finger protein family. In terms of assembly, interacts (via homeobox domain) with APBB1 (via PID domain 1).

The protein resides in the nucleus. Probable transcriptional regulator involved in developmental processes. May act as a transcriptional repressor (Potential). This is Teashirt homolog 1 (Tshz1) from Mus musculus (Mouse).